A 200-amino-acid chain; its full sequence is NADH-quinone oxidoreductase subunit B (200 aa).

4 residues coordinate [4Fe-4S] cluster: Cys-78, Cys-79, Cys-144, and Cys-174.

The protein belongs to the complex I 20 kDa subunit family. As to quaternary structure, NDH-1 is composed of 14 different subunits. Subunits NuoB, C, D, E, F, and G constitute the peripheral sector of the complex. [4Fe-4S] cluster is required as a cofactor.

The protein localises to the cell membrane. It catalyses the reaction a quinone + NADH + 5 H(+)(in) = a quinol + NAD(+) + 4 H(+)(out). NDH-1 shuttles electrons from NADH, via FMN and iron-sulfur (Fe-S) centers, to quinones in the respiratory chain. The immediate electron acceptor for the enzyme in this species is believed to be ubiquinone. Couples the redox reaction to proton translocation (for every two electrons transferred, four hydrogen ions are translocated across the cytoplasmic membrane), and thus conserves the redox energy in a proton gradient. This chain is NADH-quinone oxidoreductase subunit B, found in Dehalococcoides mccartyi (strain ATCC BAA-2266 / KCTC 15142 / 195) (Dehalococcoides ethenogenes (strain 195)).